The primary structure comprises 571 residues: Origin recognition complex subunit 5 (571 aa).

Disordered stretches follow at residues 90–142 (DDEY…YDDD) and 404–430 (QIYP…GRQL). Composition is skewed to low complexity over residues 107–133 (NNNN…NNND) and 407–416 (PPQQVPQQQK). A compositionally biased stretch (basic and acidic residues) spans 417-428 (QQEKEKEKEKGR).

Belongs to the ORC1 family. In terms of assembly, ORC is composed of six subunits.

The protein localises to the nucleus. Functionally, component of the origin recognition complex (ORC) that binds origins of replication. DNA-binding is ATP-dependent, however specific DNA sequences that define origins of replication have not been identified so far. ORC is required to assemble the pre-replication complex necessary to initiate DNA replication. This chain is Origin recognition complex subunit 5 (orcE), found in Dictyostelium discoideum (Social amoeba).